Reading from the N-terminus, the 150-residue chain is Thyroid hormone-inducible hepatic protein (150 aa).

Residues 83–104 (KVAGNETSEAENDAAETEEAEE) form a disordered region. A Phosphoserine modification is found at serine 90. Acidic residues predominate over residues 90-104 (SEAENDAAETEEAEE).

It belongs to the SPOT14 family. In terms of assembly, homodimer. Heterodimer with MID1IP1. Interacts with THRB and PLAGL1. As to expression, mainly expressed in tissues that synthesize triglycerides.

It is found in the nucleus. The protein localises to the cytoplasm. Functionally, plays a role in the regulation of lipogenesis, especially in lactating mammary gland. Important for the biosynthesis of triglycerides with medium-length fatty acid chains. May modulate lipogenesis by interacting with MID1IP1 and preventing its interaction with ACACA. May function as transcriptional coactivator. May modulate the transcription factor activity of THRB. This chain is Thyroid hormone-inducible hepatic protein (Thrsp), found in Mus musculus (Mouse).